Reading from the N-terminus, the 292-residue chain is THO complex subunit 4B (292 aa).

The disordered stretch occupies residues M1–F50. Position 2 is an N-acetylserine (S2). A compositionally biased stretch (gly residues) spans R23–S42. Residues T108–T185 form the RRM domain. The segment covering G241 to G252 has biased composition (gly residues). Positions G241 to S292 are disordered. Residues E280 to S292 show a composition bias toward basic and acidic residues.

It belongs to the ALYREF family. As to quaternary structure, interacts with RH15 and RH56.

Its subcellular location is the nucleus. It is found in the nucleoplasm. Export adapter involved in nuclear export of spliced and unspliced mRNA. The polypeptide is THO complex subunit 4B (ALY2) (Arabidopsis thaliana (Mouse-ear cress)).